Consider the following 222-residue polypeptide: 7-cyano-7-deazaguanine synthase (222 aa).

Residue 8–18 (LSGGLDSTTCL) participates in ATP binding. Positions 186, 194, 197, and 200 each coordinate Zn(2+).

Belongs to the QueC family. Homodimer. Zn(2+) is required as a cofactor.

The catalysed reaction is 7-carboxy-7-deazaguanine + NH4(+) + ATP = 7-cyano-7-deazaguanine + ADP + phosphate + H2O + H(+). Its pathway is purine metabolism; 7-cyano-7-deazaguanine biosynthesis. In terms of biological role, catalyzes the ATP-dependent conversion of 7-carboxy-7-deazaguanine (CDG) to 7-cyano-7-deazaguanine (preQ(0)). The sequence is that of 7-cyano-7-deazaguanine synthase from Acetivibrio thermocellus (strain ATCC 27405 / DSM 1237 / JCM 9322 / NBRC 103400 / NCIMB 10682 / NRRL B-4536 / VPI 7372) (Clostridium thermocellum).